Consider the following 63-residue polypeptide: Large ribosomal subunit protein bL28 (63 aa).

The protein belongs to the bacterial ribosomal protein bL28 family.

The polypeptide is Large ribosomal subunit protein bL28 (Beutenbergia cavernae (strain ATCC BAA-8 / DSM 12333 / CCUG 43141 / JCM 11478 / NBRC 16432 / NCIMB 13614 / HKI 0122)).